The chain runs to 144 residues: Conopressin-conophysin (144 aa).

The N-terminal stretch at 1-27 (MTRSALQMGRLTLVLCLLLQLVLVTQA) is a signal peptide. The cysteines at positions 28 and 33 are disulfide-linked. Residue Asp36 is modified to Aspartic acid 1-amide. A propeptide spanning residues 37–44 (GERDVDGR) is cleaved from the precursor. 7 cysteine pairs are disulfide-bonded: Cys50–Cys90, Cys53–Cys64, Cys58–Cys80, Cys65–Cys70, Cys97–Cys117, Cys109–Cys129, and Cys118–Cys123. A propeptide spanning residues 131–144 (KESKSGIRVGCQRS) is cleaved from the precursor.

The protein belongs to the vasopressin/oxytocin family. Expressed by the venom duct.

It localises to the secreted. The polypeptide is Conopressin-conophysin (Conus bayani (Bayan's cone)).